The chain runs to 369 residues: Molybdenum import ATP-binding protein ModC (369 aa).

The ABC transporter domain occupies 3–246 (TRPEQASKDT…LDLPLAHGDS (244 aa)). 44–51 (GPSGSGKT) is a binding site for ATP. A Mop domain is found at 305–369 (DTSILNILPA…AQIKGVAILG (65 aa)).

The protein belongs to the ABC transporter superfamily. Molybdate importer (TC 3.A.1.8) family. As to quaternary structure, the complex is composed of two ATP-binding proteins (ModC), two transmembrane proteins (ModB) and a solute-binding protein (ModA).

It is found in the cell inner membrane. It carries out the reaction molybdate(out) + ATP + H2O = molybdate(in) + ADP + phosphate + H(+). In terms of biological role, part of the ABC transporter complex ModABC involved in molybdenum import. Responsible for energy coupling to the transport system. The protein is Molybdenum import ATP-binding protein ModC of Albidiferax ferrireducens (strain ATCC BAA-621 / DSM 15236 / T118) (Rhodoferax ferrireducens).